The primary structure comprises 304 residues: tRNA uridine(34) hydroxylase (304 aa).

Residues 124 to 219 (QDEETLLIDT…YLETIPKEDS (96 aa)) enclose the Rhodanese domain. The Cysteine persulfide intermediate role is filled by C179.

This sequence belongs to the TrhO family.

It catalyses the reaction uridine(34) in tRNA + AH2 + O2 = 5-hydroxyuridine(34) in tRNA + A + H2O. Catalyzes oxygen-dependent 5-hydroxyuridine (ho5U) modification at position 34 in tRNAs. The sequence is that of tRNA uridine(34) hydroxylase from Bartonella henselae (strain ATCC 49882 / DSM 28221 / CCUG 30454 / Houston 1) (Rochalimaea henselae).